The primary structure comprises 429 residues: MIRVIQPPLIASKQLFRRYLATGGTFTNKTSQLDRATLTIKDGPVFSGYSFGANKNISGEAVFTTSLVGYPESMTDPSYKGQILCFTQPLIGNYGVPSSTLKDEFNLLKHMESPSVQCIGIVVADVALEYSHWTAVESLQQWCQRSGVAAISGVDTRQLVSYLREKGSSLAKITIGEEYDADEDAAFEDPGSVNLVHKVSTKAPFHISCPEKYAKGLHIAVLDCGAKENILRCLVERGASLTVFPYNYPIDKIANKFDGIFISNGPGDPTHCSSTTENLAKTMEKYHDLPIFGICLGHQLLALASGARTIKMKYGNRAHNIPALDLTTGKCHITSQNHGYSVDAETLDSDWEPYFTNLNDLSNEGMKHKSRPIFSTQFHPEAKGGPLDTAFLFDKFFENIEQYRATNGLNLGNVDDSLLVDILPKGRVL.

Residues 1–20 constitute a mitochondrion transit peptide; that stretch reads MIRVIQPPLIASKQLFRRYL. The Glutamine amidotransferase type-1 domain maps to 218–406; sequence HIAVLDCGAK…FENIEQYRAT (189 aa). Catalysis depends on cysteine 295, which acts as the Nucleophile. Catalysis depends on residues histidine 379 and glutamate 381.

This sequence belongs to the CarA family. In terms of assembly, heterodimer composed of 2 chains; the small (or glutamine) chain promotes the hydrolysis of glutamine to ammonia, which is used by the large (or ammonia) chain to synthesize carbamoyl phosphate.

The protein localises to the mitochondrion matrix. The catalysed reaction is hydrogencarbonate + L-glutamine + 2 ATP + H2O = carbamoyl phosphate + L-glutamate + 2 ADP + phosphate + 2 H(+). It carries out the reaction L-glutamine + H2O = L-glutamate + NH4(+). Its pathway is amino-acid biosynthesis; L-arginine biosynthesis; carbamoyl phosphate from bicarbonate: step 1/1. In terms of biological role, small subunit of the arginine-specific carbamoyl phosphate synthase (CPSase). CPSase catalyzes the formation of carbamoyl phosphate from the ammonia moiety of glutamine, carbonate, and phosphate donated by ATP, the first step of the arginine biosynthetic pathway. The small subunit (glutamine amidotransferase) binds and cleaves glutamine to supply the large subunit with the substrate ammonia. This chain is Carbamoyl phosphate synthase arginine-specific small chain (CPA1), found in Debaryomyces hansenii (strain ATCC 36239 / CBS 767 / BCRC 21394 / JCM 1990 / NBRC 0083 / IGC 2968) (Yeast).